Reading from the N-terminus, the 347-residue chain is Ribosomal RNA small subunit methyltransferase H (347 aa).

S-adenosyl-L-methionine is bound by residues 47–49, D64, F91, D114, and Q121; that span reads GGY. The interval 291–347 is disordered; it reads PAVKGAVGPTAEEEERNPRARSAKLRAGIRTENPPLEDDLSLFGLPKLPETNELARS.

Belongs to the methyltransferase superfamily. RsmH family.

Its subcellular location is the cytoplasm. It catalyses the reaction cytidine(1402) in 16S rRNA + S-adenosyl-L-methionine = N(4)-methylcytidine(1402) in 16S rRNA + S-adenosyl-L-homocysteine + H(+). In terms of biological role, specifically methylates the N4 position of cytidine in position 1402 (C1402) of 16S rRNA. The polypeptide is Ribosomal RNA small subunit methyltransferase H (Brucella anthropi (strain ATCC 49188 / DSM 6882 / CCUG 24695 / JCM 21032 / LMG 3331 / NBRC 15819 / NCTC 12168 / Alc 37) (Ochrobactrum anthropi)).